A 75-amino-acid chain; its full sequence is MSSGGLLLLLGLLTLWAELIPVSGQDHPKKPGLCPPRPQKPPCVRECKNDWSCPGEQKCCRYGCIFECRDPIFVK.

The N-terminal stretch at 1–24 (MSSGGLLLLLGLLTLWAELIPVSG) is a signal peptide. One can recognise a WAP domain in the interval 27-72 (HPKKPGLCPPRPQKPPCVRECKNDWSCPGEQKCCRYGCIFECRDPI). 4 disulfide bridges follow: Cys34–Cys60, Cys43–Cys64, Cys47–Cys59, and Cys53–Cys68.

The protein belongs to the venom waprin family. As to expression, expressed by the venom gland.

It localises to the secreted. Its function is as follows. Damages membranes of susceptible bacteria. Has no hemolytic activity. Not toxic to mice. Does not inhibit the proteinases elastase and cathepsin G. The protein is Stewaprin-a of Hoplocephalus stephensii (Stephens's banded snake).